Consider the following 328-residue polypeptide: dTDP-3,4-didehydro-2,6-dideoxy-alpha-D-glucose 3-reductase (328 aa).

Residue R20 participates in substrate binding. Residues 38–39 (SR), L75, and H80 contribute to the NADP(+) site. K98 acts as the Proton donor in catalysis. R166 and D178 together coordinate NADP(+). Residues Y236 and T256 each contribute to the substrate site.

Belongs to the Gfo/Idh/MocA family.

It catalyses the reaction dTDP-4-dehydro-2,6-dideoxy-alpha-D-glucose + NADP(+) = dTDP-3,4-didehydro-2,6-dideoxy-alpha-D-glucose + NADPH + H(+). It participates in antibiotic biosynthesis. Functionally, involved in the biosynthesis of one of the two 2,6-deoxysugars, dTDP-L-oleandrose, attached to the macrolactone ring oleandolide to produce the aglycone antibiotic oleandomycin. Catalyzes the reduction of the C-3 keto moiety of dTDP-3,4-diketo-2,6-dideoxy-alpha-D-glucose to yield dTDP-4-keto-2,6-dideoxy-alpha-D-glucose. NADPH is the better reductant, however NADH can also be used. The sequence is that of dTDP-3,4-didehydro-2,6-dideoxy-alpha-D-glucose 3-reductase from Streptomyces antibioticus.